A 455-amino-acid chain; its full sequence is Adenylosuccinate synthetase isozyme 2 (455 aa).

The disordered stretch occupies residues 1 to 25 (MSDSGDAQPQDGGNSSSSRGKSPSV). A compositionally biased stretch (low complexity) spans 12 to 25 (GGNSSSSRGKSPSV). GTP is bound by residues 38–44 (GDEGKGK) and 66–68 (GHT). The Proton acceptor role is filled by Asp39. Residues Asp39 and Gly66 each contribute to the Mg(2+) site. Asp39 contributes to the substrate binding site. IMP-binding positions include 39-42 (DEGK), 64-67 (NAGH), Thr161, Arg175, Asn254, Thr269, and Arg333. The active-site Proton donor is His67. 329-335 (VTTGRKR) provides a ligand contact to substrate. GTP is bound by residues Arg335, 361-363 (KLD), and 443-446 (GVGK).

This sequence belongs to the adenylosuccinate synthetase family. As to quaternary structure, homodimer. Mg(2+) serves as cofactor.

It is found in the cytoplasm. The protein localises to the mitochondrion. It catalyses the reaction IMP + L-aspartate + GTP = N(6)-(1,2-dicarboxyethyl)-AMP + GDP + phosphate + 2 H(+). The protein operates within purine metabolism; AMP biosynthesis via de novo pathway; AMP from IMP: step 1/2. With respect to regulation, inhibited competitively by AMP and IMP and non-competitively by fructose 1,6-bisphosphate. Its function is as follows. Plays an important role in the de novo pathway and in the salvage pathway of purine nucleotide biosynthesis. Catalyzes the first committed step in the biosynthesis of AMP from IMP. This chain is Adenylosuccinate synthetase isozyme 2 (adss2), found in Danio rerio (Zebrafish).